We begin with the raw amino-acid sequence, 547 residues long: Probable aquaporin-5 (547 aa).

A compositionally biased stretch (polar residues) spans 1–13 (MSSSILNNRSARS). Residues 1–208 (MSSSILNNRS…DPRIPPNDRR (208 aa)) form a disordered region. Topologically, residues 1-269 (MSSSILNNRS…QWMNSNFKNH (269 aa)) are cytoplasmic. Residues 15 to 32 (PAGANPAFNPPAEASSSS) show a composition bias toward low complexity. Composition is skewed to basic and acidic residues over residues 152 to 169 (EYERYYRNEGRNDRDRYT) and 198 to 208 (DDPRIPPNDRR). A helical transmembrane segment spans residues 270–290 (FVAGVGEFIGTTMFLFFAFAG). The Extracellular portion of the chain corresponds to 291–316 (TEVANIQADTTNRTTTGESTGSLNVS). Asn302 and Asn314 each carry an N-linked (GlcNAc...) asparagine glycan. The chain crosses the membrane as a helical span at residues 317-337 (KLLYISIIFGFSLMVNVWVFF). Topologically, residues 338–363 (RISGGLFNPAVTMAMLMVKAISVTRA) are cytoplasmic. The short motif at 345-347 (NPA) is the NPA 1 element. Residues 364–384 (IVLFLAQILGSMLASVVVRYL) form a helical membrane-spanning segment. The Extracellular portion of the chain corresponds to 385 to 400 (FPETFNVRTTLGGGAS). A helical membrane pass occupies residues 401–421 (LVQGVFIEALLTAELVFTIFM). At 422–428 (LAKEKHR) the chain is on the cytoplasmic side. Residues 429–449 (ATFIAPVGIGLALFIAEMVGV) form a helical membrane-spanning segment. Over 450–475 (QFTGGSLNPARSFGPCVITGSFDTEH) the chain is Extracellular. Residues 457 to 459 (NPA) carry the NPA 2 motif. The chain crosses the membrane as a helical span at residues 476–496 (WIYWVGPAIGSLIAVCFYWFI). Topologically, residues 497-547 (KTLEYEMANPGADGDDLNDPTKNPEKRAEIQASKPVPTAAFGSGKTASILS) are cytoplasmic. Positions 510–547 (GDDLNDPTKNPEKRAEIQASKPVPTAAFGSGKTASILS) are disordered.

The protein belongs to the MIP/aquaporin (TC 1.A.8) family.

It localises to the membrane. The catalysed reaction is H2O(in) = H2O(out). In terms of biological role, probable water channel that may have redundant functions with FgAQP3. This is Probable aquaporin-5 from Gibberella zeae (strain ATCC MYA-4620 / CBS 123657 / FGSC 9075 / NRRL 31084 / PH-1) (Wheat head blight fungus).